Reading from the N-terminus, the 64-residue chain is Large ribosomal subunit protein bL35 (64 aa).

The segment at 1–41 is disordered; that stretch reads MPKMKSHSGASKRFKVSGKGKLLRQQANRRHLLEHKPSRRT.

This sequence belongs to the bacterial ribosomal protein bL35 family.

This chain is Large ribosomal subunit protein bL35, found in Nocardia farcinica (strain IFM 10152).